The following is a 272-amino-acid chain: ATP synthase subunit a (272 aa).

5 helical membrane passes run 41-61 (VLNIDSMFFSVVLGLVFLVLF), 101-121 (VIAPLALTIFVWVFLMNFMDL), 147-167 (DVNITLSMALGVFVLILFYSI), 221-241 (LIFILIAGLLPWWSQWILSVP), and 243-263 (AIFHILIISLQAFIFMVLTIV).

It belongs to the ATPase A chain family. In terms of assembly, F-type ATPases have 2 components, CF(1) - the catalytic core - and CF(0) - the membrane proton channel. CF(1) has five subunits: alpha(3), beta(3), gamma(1), delta(1), epsilon(1). CF(0) has three main subunits: a(1), b(2) and c(9-12). The alpha and beta chains form an alternating ring which encloses part of the gamma chain. CF(1) is attached to CF(0) by a central stalk formed by the gamma and epsilon chains, while a peripheral stalk is formed by the delta and b chains.

The protein resides in the cell inner membrane. Functionally, key component of the proton channel; it plays a direct role in the translocation of protons across the membrane. The chain is ATP synthase subunit a from Erwinia tasmaniensis (strain DSM 17950 / CFBP 7177 / CIP 109463 / NCPPB 4357 / Et1/99).